A 364-amino-acid chain; its full sequence is CCA-adding enzyme (364 aa).

Residues G19 and R22 each coordinate ATP. 2 residues coordinate CTP: G19 and R22. Mg(2+) contacts are provided by D32 and D34. The ATP site is built by R102, R148, and R151. Residues R102, R148, and R151 each coordinate CTP.

The protein belongs to the tRNA nucleotidyltransferase/poly(A) polymerase family. Bacterial CCA-adding enzyme type 2 subfamily. Mg(2+) is required as a cofactor.

It catalyses the reaction a tRNA precursor + 2 CTP + ATP = a tRNA with a 3' CCA end + 3 diphosphate. The catalysed reaction is a tRNA with a 3' CCA end + 2 CTP + ATP = a tRNA with a 3' CCACCA end + 3 diphosphate. Functionally, catalyzes the addition and repair of the essential 3'-terminal CCA sequence in tRNAs without using a nucleic acid template. Adds these three nucleotides in the order of C, C, and A to the tRNA nucleotide-73, using CTP and ATP as substrates and producing inorganic pyrophosphate. tRNA 3'-terminal CCA addition is required both for tRNA processing and repair. Also involved in tRNA surveillance by mediating tandem CCA addition to generate a CCACCA at the 3' terminus of unstable tRNAs. While stable tRNAs receive only 3'-terminal CCA, unstable tRNAs are marked with CCACCA and rapidly degraded. This is CCA-adding enzyme from Bordetella pertussis (strain Tohama I / ATCC BAA-589 / NCTC 13251).